Here is a 129-residue protein sequence, read N- to C-terminus: Small ribosomal subunit protein uS11 (129 aa).

This sequence belongs to the universal ribosomal protein uS11 family. In terms of assembly, part of the 30S ribosomal subunit. Interacts with proteins S7 and S18. Binds to IF-3.

In terms of biological role, located on the platform of the 30S subunit, it bridges several disparate RNA helices of the 16S rRNA. Forms part of the Shine-Dalgarno cleft in the 70S ribosome. The protein is Small ribosomal subunit protein uS11 of Staphylococcus carnosus (strain TM300).